The following is a 630-amino-acid chain: ATP-dependent RNA helicase mrh4, mitochondrial (630 aa).

The N-terminal 46 residues, 1–46, are a transit peptide targeting the mitochondrion; sequence MNRLGGLSLPLRPVCLFCRAQTSLALSPLQGGQAVRSIATGRLRRR. Residues 46-108 form a disordered region; sequence RARMTLSKDV…GETEEKPAMN (63 aa). The Q motif motif lies at 167 to 174; it reads DAVPTPIQ. The 213-residue stretch at 195–407 folds into the Helicase ATP-binding domain; sequence DDDEPQYEQY…RKLYPDIWRL (213 aa). 208–215 provides a ligand contact to ATP; that stretch reads AETGSGKT. Positions 235–255 are enriched in basic and acidic residues; sequence EMEKKEEERKVREREENKKNQ. The disordered stretch occupies residues 235-265; the sequence is EMEKKEEERKVREREENKKNQAFDLEPEIPP. Positions 354-357 match the DEAD box motif; sequence DEAD. Residues 452-630 enclose the Helicase C-terminal domain; the sequence is GSDEAGSPWS…VREVWFGLDS (179 aa).

This sequence belongs to the DEAD box helicase family. MRH4 subfamily.

The protein resides in the mitochondrion. It catalyses the reaction ATP + H2O = ADP + phosphate + H(+). ATP-binding RNA helicase involved in mitochondrial RNA metabolism. Required for maintenance of mitochondrial DNA. The sequence is that of ATP-dependent RNA helicase mrh4, mitochondrial (mrh4) from Emericella nidulans (strain FGSC A4 / ATCC 38163 / CBS 112.46 / NRRL 194 / M139) (Aspergillus nidulans).